A 158-amino-acid polypeptide reads, in one-letter code: UPF0102 protein GbCGDNIH1_0975 (158 aa).

It belongs to the UPF0102 family.

This Granulibacter bethesdensis (strain ATCC BAA-1260 / CGDNIH1) protein is UPF0102 protein GbCGDNIH1_0975.